We begin with the raw amino-acid sequence, 383 residues long: Acetylornithine deacetylase (383 aa).

Histidine 80 is a binding site for Zn(2+). The active site involves aspartate 82. Aspartate 112 serves as a coordination point for Zn(2+). Glutamate 144 is an active-site residue. Zn(2+)-binding residues include glutamate 145, glutamate 169, and histidine 355.

This sequence belongs to the peptidase M20A family. ArgE subfamily. Homodimer. Zn(2+) is required as a cofactor. Co(2+) serves as cofactor. The cofactor is glutathione.

It is found in the cytoplasm. It catalyses the reaction N(2)-acetyl-L-ornithine + H2O = L-ornithine + acetate. It functions in the pathway amino-acid biosynthesis; L-arginine biosynthesis; L-ornithine from N(2)-acetyl-L-ornithine (linear): step 1/1. Its function is as follows. Catalyzes the hydrolysis of the amide bond of N(2)-acetylated L-amino acids. Cleaves the acetyl group from N-acetyl-L-ornithine to form L-ornithine, an intermediate in L-arginine biosynthesis pathway, and a branchpoint in the synthesis of polyamines. The polypeptide is Acetylornithine deacetylase (Salmonella typhi).